Here is a 556-residue protein sequence, read N- to C-terminus: Set1/Ash2 histone methyltransferase complex subunit ASH2 (556 aa).

The segment covering 1–19 has biased composition (polar residues); sequence MEDSQMDTSSPTESSSEVN. Positions 1–27 are disordered; it reads MEDSQMDTSSPTESSSEVNFTAEEDKS. The segment at 34-90 adopts a PHD-type zinc-finger fold; the sequence is AGVCYCGKERNLNIVELLCATCSRWVHETCVSYQLGKGKLLPFITNYVFVCKNCSAS. Residues Cys-37, Cys-39, Cys-52, Cys-55, His-60, Cys-63, Cys-84, and Cys-87 each coordinate Zn(2+). A disordered region spans residues 216-251; it reads ASLSKNNRQKRKFPGTDSGPTGKKGRPSSDITANVK. The 223-residue stretch at 288-510 folds into the B30.2/SPRY domain; the sequence is SSDWAGKPIP…VSVNFGPAFK (223 aa).

In terms of assembly, core component of several methyltransferase-containing complexes. Component of the SET1C/COMPASS complex, composed at least of the catalytic subunit Set1, wds/WDR5, Wdr82, Rbbp5, ash2, Cfp1/CXXC1, hcf and Dpy-30L1. Component of the MLL3/4 (Histone-lysine N-methyltransferase/demethylase TRR) complex composed at least of the catalytic subunit trr, ash2, Rbbp5, Dpy-30L1, wds, hcf, ptip, Pa1, Utx, Lpt and Ncoa6. Interacts with hcf. Interacts with trr. As to quaternary structure, interacts (via B30.2/SPRY domain) with sktl; the interaction is direct. In terms of tissue distribution, in larvae and pupae, expressed in imaginal disks, salivary gland and fat body cells. No expression detected in central nervous system (at protein level).

It is found in the nucleus. The protein localises to the chromosome. Functionally, transcriptional regulator. Regulates a number of genes involved in wing development including activation of net and bs and repression of rho and kni and controls vein-intervein patterning during wing development. Required for correct expression of a number of homeotic genes including Scr in the first leg imaginal disk and Ubx in the third leg imaginal disk and haltere disks. Required for stabilization of the histone-lysine N-methyltransferase trr and for trimethylation of 'Lys-4' of histone H3. Together with sktl probably plays a role in maintenance of transcriptionally active chromatin through down-regulation of histone H1 hyperphosphorylation. This chain is Set1/Ash2 histone methyltransferase complex subunit ASH2, found in Drosophila melanogaster (Fruit fly).